Here is a 279-residue protein sequence, read N- to C-terminus: Probable endonuclease 4 (279 aa).

Residues His66, His106, Glu142, Asp176, His179, His213, Asp226, His228, and Glu258 each coordinate Zn(2+).

It belongs to the AP endonuclease 2 family. It depends on Zn(2+) as a cofactor.

It carries out the reaction Endonucleolytic cleavage to 5'-phosphooligonucleotide end-products.. In terms of biological role, endonuclease IV plays a role in DNA repair. It cleaves phosphodiester bonds at apurinic or apyrimidinic (AP) sites, generating a 3'-hydroxyl group and a 5'-terminal sugar phosphate. This chain is Probable endonuclease 4, found in Photobacterium profundum (strain SS9).